The chain runs to 404 residues: Tryptophan synthase beta chain (404 aa).

Lys90 bears the N6-(pyridoxal phosphate)lysine mark.

It belongs to the TrpB family. As to quaternary structure, tetramer of two alpha and two beta chains. The cofactor is pyridoxal 5'-phosphate.

The catalysed reaction is (1S,2R)-1-C-(indol-3-yl)glycerol 3-phosphate + L-serine = D-glyceraldehyde 3-phosphate + L-tryptophan + H2O. It functions in the pathway amino-acid biosynthesis; L-tryptophan biosynthesis; L-tryptophan from chorismate: step 5/5. In terms of biological role, the beta subunit is responsible for the synthesis of L-tryptophan from indole and L-serine. The chain is Tryptophan synthase beta chain (trpB) from Geobacillus stearothermophilus (Bacillus stearothermophilus).